Here is a 229-residue protein sequence, read N- to C-terminus: DNA mismatch repair protein MutH (229 aa).

This sequence belongs to the MutH family.

It is found in the cytoplasm. In terms of biological role, sequence-specific endonuclease that cleaves unmethylated GATC sequences. It is involved in DNA mismatch repair. In Shigella flexneri, this protein is DNA mismatch repair protein MutH.